Consider the following 1095-residue polypeptide: Inactive phospholipase C-like protein 1 (1095 aa).

Over residues methionine 1–proline 11 the composition is skewed to basic and acidic residues. Residues methionine 1–serine 61 form a disordered region. Residues serine 47 and serine 77 each carry the phosphoserine modification. The interaction with PPP1C stretch occupies residues serine 83–valine 222. Threonine 93 is subject to Phosphothreonine; by PKA. Serine 95 is modified (phosphoserine). In terms of domain architecture, PH spans serine 113–serine 223. In terms of domain architecture, PI-PLC X-box spans glutamine 398–lysine 542. Positions lysine 543 to arginine 567 are interaction with GABA A beta subunit. Threonine 556 carries the phosphothreonine modification. A Phosphoserine modification is found at serine 569. The region spanning leucine 585–arginine 701 is the PI-PLC Y-box domain. The C2 domain occupies arginine 701–serine 830. 2 coiled-coil regions span residues leucine 894–leucine 914 and leucine 1034–cysteine 1059. A disordered region spans residues lysine 1066 to leucine 1095. Over residues alanine 1074–leucine 1095 the composition is skewed to basic and acidic residues. The residue at position 1079 (serine 1079) is a Phosphoserine.

As to quaternary structure, interacts with PPP2CA. Interacts with Ins(1,4,5)P3, Ins(1,4,5,6)P4, GABARAP, GABA receptor beta subunits, GABA receptor gamma-2 subunits and PPP1C. May form a ternary complex with GABA receptor beta subunit and GABARAP. The formation of a ternary complex with GABA receptor beta subunit and GABARAP could be the key step for facilitating the association of GABARAP with the GABA receptor gamma-2 subunit and to allow it to be transported at the right destination. In terms of processing, phosphorylated by the catalytic subunit of PKA. Phosphorylation of Thr-93 resulted in dissociation of PPP1C from PRIP1. As to expression, expressed in a variety of fetal and adult organs including brain, lung and kidney. Its expression was greatly reduced in small and non-small cell lung carcinoma. Isoform 1 is predominantly expressed in brain.

Its subcellular location is the cytoplasm. Functionally, involved in an inositol phospholipid-based intracellular signaling cascade. Shows no PLC activity to phosphatidylinositol 4,5-bisphosphate and phosphatidylinositol. Component in the phospho-dependent endocytosis process of GABA A receptor. Regulates the turnover of receptors and thus contributes to the maintenance of GABA-mediated synaptic inhibition. Its aberrant expression could contribute to the genesis and progression of lung carcinoma. Acts as an inhibitor of PPP1C. This chain is Inactive phospholipase C-like protein 1 (PLCL1), found in Homo sapiens (Human).